Here is a 284-residue protein sequence, read N- to C-terminus: Phospholipid phosphatase 1 (284 aa).

Residues 1 to 6 lie on the Cytoplasmic side of the membrane; sequence MFDKTR. A PDZ-binding; involved in localization to the apical cell membrane motif is present at residues 5–7; the sequence is TRL. A helical transmembrane segment spans residues 7-27; sequence LPYVALDVLCVLLAGLPFAIL. The Extracellular segment spans residues 28–53; it reads TSRHTPFQRGVFCNDESIKYPYKEDT. The chain crosses the membrane as a helical span at residues 54–74; the sequence is IPYALLGGIIIPFSIIVIILG. Residues 75 to 94 are Cytoplasmic-facing; sequence ETLSVYCNLLHSNSFIRNNY. A helical membrane pass occupies residues 95–115; it reads IATIYKAIGTFLFGAAASQSL. Topologically, residues 116–164 are extracellular; it reads TDIAKYSIGRLRPHFLDVCDPDWSKINCSDGYIEYYICRGNAERVKEGR. The tract at residues 120–128 is phosphatase sequence motif I; the sequence is KYSIGRLRP. Asn-142 carries an N-linked (GlcNAc...) asparagine glycan. The chain crosses the membrane as a helical span at residues 165 to 185; sequence LSFYSGHSSFSMYCMLFVALY. The tract at residues 168-171 is phosphatase sequence motif II; sequence YSGH. His-171 acts as the Proton donors in catalysis. The Cytoplasmic portion of the chain corresponds to 186–199; the sequence is LQARMKGDWARLLR. The chain crosses the membrane as a helical span at residues 200–220; the sequence is PTLQFGLVAVSIYVGLSRVSD. The interval 216-227 is phosphatase sequence motif III; it reads SRVSDYKHHWSD. At 221–229 the chain is on the extracellular side; it reads YKHHWSDVL. His-223 functions as the Nucleophile in the catalytic mechanism. A helical transmembrane segment spans residues 230-250; the sequence is TGLIQGALVAILVAVYVSDFF. At 251–284 the chain is on the cytoplasmic side; sequence KERTSFKERKEEDSHTTLHETPTTGNHYPSNHQP. Positions 260 to 284 are disordered; that stretch reads KEEDSHTTLHETPTTGNHYPSNHQP. The span at 269 to 284 shows a compositional bias: polar residues; that stretch reads HETPTTGNHYPSNHQP.

It belongs to the PA-phosphatase related phosphoesterase family. As to quaternary structure, forms functional homodimers and homooligomers that are not required for substrate recognition and catalytic activity. Can also form heterooligomers with PLPP2 and PLPP3. In terms of processing, N-glycosylated. N-linked sugars are of the complex type. N-glycosylation is not required for the phosphatase activity. As to expression, widely expressed with highest expression found in prostate. Found to be down-regulated in colon adenocarcinomas. In terms of tissue distribution, predominant in kidney, lung, placenta and liver. Predominant in heart and pancreas.

The protein localises to the cell membrane. It localises to the apical cell membrane. The protein resides in the membrane raft. It is found in the membrane. Its subcellular location is the caveola. The catalysed reaction is a 1,2-diacyl-sn-glycero-3-phosphate + H2O = a 1,2-diacyl-sn-glycerol + phosphate. The enzyme catalyses 1,2-dihexadecanoyl-sn-glycero-3-phosphate + H2O = 1,2-dihexadecanoyl-sn-glycerol + phosphate. It carries out the reaction 1,2-di-(9Z-octadecenoyl)-sn-glycero-3-phosphate + H2O = 1,2-di-(9Z-octadecenoyl)-sn-glycerol + phosphate. It catalyses the reaction a monoacyl-sn-glycero-3-phosphate + H2O = a monoacylglycerol + phosphate. The catalysed reaction is (9Z)-octadecenoyl-sn-glycero-3-phosphate + H2O = (9Z-octadecenoyl)-glycerol + phosphate. The enzyme catalyses a 1-acyl-sn-glycero-3-phosphate + H2O = a 1-acyl-sn-glycerol + phosphate. It carries out the reaction 1-(9Z-octadecenoyl)-sn-glycero-3-phosphate + H2O = 1-(9Z-octadecenoyl)-sn-glycerol + phosphate. It catalyses the reaction a 1,2-diacyl-sn-glycerol 3-diphosphate + H2O = a 1,2-diacyl-sn-glycero-3-phosphate + phosphate + H(+). The catalysed reaction is sphing-4-enine 1-phosphate + H2O = sphing-4-enine + phosphate. The enzyme catalyses an N-acylsphing-4-enine 1-phosphate + H2O = an N-acylsphing-4-enine + phosphate. It carries out the reaction N-(octanoyl)-sphing-4-enine-1-phosphate + H2O = N-octanoylsphing-4-enine + phosphate. It catalyses the reaction N-(9Z-octadecenoyl)-ethanolamine phosphate + H2O = N-(9Z-octadecenoyl) ethanolamine + phosphate. The catalysed reaction is 1-hexadecanoyl-2-(9Z-octadecenoyl)-sn-glycero-3-phosphate + H2O = 1-hexadecanoyl-2-(9Z-octadecenoyl)-sn-glycerol + phosphate. It functions in the pathway lipid metabolism; phospholipid metabolism. Magnesium-independent phospholipid phosphatase. Insensitive to N-ethylmaleimide. Inhibited by sphingosine, zinc ions and modestly by propanolol. Inhibited by vanadate. Its function is as follows. Magnesium-independent phospholipid phosphatase of the plasma membrane that catalyzes the dephosphorylation of a variety of glycerolipid and sphingolipid phosphate esters including phosphatidate/PA, lysophosphatidate/LPA, diacylglycerol pyrophosphate/DGPP, sphingosine 1-phosphate/S1P and ceramide 1-phosphate/C1P. Also acts on N-oleoyl ethanolamine phosphate/N-(9Z-octadecenoyl)-ethanolamine phosphate, a potential physiological compound. Through its extracellular phosphatase activity allows both the hydrolysis and the cellular uptake of these bioactive lipid mediators from the milieu, regulating signal transduction in different cellular processes. It is for instance essential for the extracellular hydrolysis of S1P and subsequent conversion into intracellular S1P. Involved in the regulation of inflammation, platelets activation, cell proliferation and migration among other processes. May also have an intracellular activity to regulate phospholipid-mediated signaling pathways. In Homo sapiens (Human), this protein is Phospholipid phosphatase 1.